Consider the following 569-residue polypeptide: Amyloid-beta A4 precursor protein-binding family A member 3 (569 aa).

Met1 carries the N-acetylmethionine modification. Disordered stretches follow at residues 1 to 53 (MEFL…MELD) and 124 to 168 (AQSV…SSPE). The span at 19 to 32 (EEPKGPEVPSEDHP) shows a compositional bias: basic and acidic residues. The segment covering 132–141 (AQAAPRLLQP) has biased composition (low complexity). Phosphoserine occurs at positions 166 and 367. Residues 212-376 (DGVLFGAKYL…SASASHPHNG (165 aa)) form the PID domain. PDZ domains are found at residues 389–475 (EVCI…IIHC) and 480–554 (TAVI…TMPA).

In terms of assembly, binds to the cytoplasmic domain of amyloid protein (APP). Interacts with HIF1AN (via N-terminus). Interacts with NECAB3; seems to mediate the interaction between NECAB3 and HIF1AN. In terms of tissue distribution, ubiquitous.

It localises to the cytoplasm. The protein localises to the perinuclear region. In terms of biological role, may modulate processing of the amyloid-beta precursor protein (APP) and hence formation of APP-beta. May enhance the activity of HIF1A in macrophages by inhibiting the activity of HIF1AN. The protein is Amyloid-beta A4 precursor protein-binding family A member 3 (Apba3) of Rattus norvegicus (Rat).